The sequence spans 34 residues: Photosystem II reaction center protein M (34 aa).

A helical membrane pass occupies residues 5–25 (ILAFIATALFILIPTAFLLII).

It belongs to the PsbM family. In terms of assembly, PSII is composed of 1 copy each of membrane proteins PsbA, PsbB, PsbC, PsbD, PsbE, PsbF, PsbH, PsbI, PsbJ, PsbK, PsbL, PsbM, PsbT, PsbX, PsbY, PsbZ, Psb30/Ycf12, at least 3 peripheral proteins of the oxygen-evolving complex and a large number of cofactors. It forms dimeric complexes.

Its subcellular location is the plastid. It localises to the chloroplast thylakoid membrane. One of the components of the core complex of photosystem II (PSII). PSII is a light-driven water:plastoquinone oxidoreductase that uses light energy to abstract electrons from H(2)O, generating O(2) and a proton gradient subsequently used for ATP formation. It consists of a core antenna complex that captures photons, and an electron transfer chain that converts photonic excitation into a charge separation. This subunit is found at the monomer-monomer interface. This chain is Photosystem II reaction center protein M, found in Agrostis stolonifera (Creeping bentgrass).